The primary structure comprises 368 residues: Endoglucanase (368 aa).

An N-terminal signal peptide occupies residues 1–21 (MNVLRSGIVTMLLLAAFSVQA). The active-site Proton donor is glutamate 55. Aspartate 116 (nucleophile) is an active-site residue.

The protein belongs to the glycosyl hydrolase 8 (cellulase D) family.

Its subcellular location is the secreted. It catalyses the reaction Endohydrolysis of (1-&gt;4)-beta-D-glucosidic linkages in cellulose, lichenin and cereal beta-D-glucans.. It participates in glycan metabolism; bacterial cellulose biosynthesis. Functionally, hydrolyzes carboxymethylcellulose. This Escherichia coli (strain K12) protein is Endoglucanase (bcsZ).